We begin with the raw amino-acid sequence, 264 residues long: Carbonic anhydrase (264 aa).

A signal peptide (tat-type signal) is located at residues 1-33 (MSSTLYRRQLLKLLGMSVLGTSFSSCVTSPARA). The Alpha-carbonic anhydrase domain occupies 36–264 (VNWGYIGKVG…LNDRLVIEAI (229 aa)). Residues H127, H129, and H146 each contribute to the Zn(2+) site. Substrate is bound at residue 214 to 215 (TT).

The protein belongs to the alpha-carbonic anhydrase family. Zn(2+) serves as cofactor. Post-translationally, predicted to be exported by the Tat system. The position of the signal peptide cleavage has not been experimentally proven.

The enzyme catalyses hydrogencarbonate + H(+) = CO2 + H2O. In terms of biological role, reversible hydration of carbon dioxide. In Nostoc sp. (strain PCC 7120 / SAG 25.82 / UTEX 2576), this protein is Carbonic anhydrase (ecaA).